A 75-amino-acid chain; its full sequence is uncharacterized protein (75 aa).

This is an uncharacterized protein from Acidithiobacillus ferridurans.